The following is a 30-amino-acid chain: Photosystem I reaction center subunit XII (30 aa).

Residues 6-26 (VFTILAIALVPAVMALLLGSA) form a helical membrane-spanning segment.

This sequence belongs to the PsaM family.

It is found in the cellular thylakoid membrane. In Synechococcus sp. (strain JA-2-3B'a(2-13)) (Cyanobacteria bacterium Yellowstone B-Prime), this protein is Photosystem I reaction center subunit XII.